The primary structure comprises 406 residues: 5-hydroxytryptamine receptor 4 (406 aa).

Topologically, residues methionine 1–lysine 19 are extracellular. N-linked (GlcNAc...) asparagine glycosylation occurs at asparagine 7. Residues valine 20–valine 44 traverse the membrane as a helical segment. Residues cysteine 45–lysine 54 are Cytoplasmic-facing. Residues threonine 55–alanine 78 traverse the membrane as a helical segment. Over isoleucine 79–phenylalanine 92 the chain is Extracellular. Residues cysteine 93–aspartate 117 traverse the membrane as a helical segment. Cysteine 93 and cysteine 184 are joined by a disulfide. Serotonin is bound at residue aspartate 100. Residues arginine 118–methionine 133 are Cytoplasmic-facing. Residues threonine 134–isoleucine 157 traverse the membrane as a helical segment. Topologically, residues methionine 158–valine 188 are extracellular. A helical transmembrane segment spans residues asparagine 189–tyrosine 212. Residues tyrosine 213–alanine 257 lie on the Cytoplasmic side of the membrane. Residues alanine 258–proline 283 traverse the membrane as a helical segment. Residue asparagine 279 participates in serotonin binding. The Extracellular portion of the chain corresponds to phenylalanine 284 to proline 290. Residues glutamate 291–phenylalanine 314 form a helical membrane-spanning segment. At leucine 315 to serine 406 the chain is on the cytoplasmic side.

Belongs to the G-protein coupled receptor 1 family. Interacts (via C-terminus 330-346 AA) with GRK5; this interaction is promoted by 5-HT (serotonin). In terms of tissue distribution, in brain, isoform 5-HT4S is restricted to the striatum. In peripheral tissues, differential expression is also observed in the atrium of the heart where only isoform 5-HT4S is detectable. In brain, isoform 5-HT4L is expressed throughout the brain, except in the cerebellum.

The protein localises to the cell membrane. It is found in the endosome membrane. In terms of biological role, G-protein coupled receptor for 5-hydroxytryptamine (serotonin), a biogenic hormone that functions as a neurotransmitter, a hormone and a mitogen. Ligand binding causes a conformation change that triggers signaling via guanine nucleotide-binding proteins (G proteins) and modulates the activity of downstream effectors. HTR4 is coupled to G(s) G alpha proteins and mediates activation of adenylate cyclase activity. In Rattus norvegicus (Rat), this protein is 5-hydroxytryptamine receptor 4 (Htr4).